Reading from the N-terminus, the 309-residue chain is tRNA dimethylallyltransferase (309 aa).

9 to 16 (GPTAVGKT) serves as a coordination point for ATP. Substrate is bound at residue 11-16 (TAVGKT). The segment at 34–37 (DSMQ) is interaction with substrate tRNA.

Belongs to the IPP transferase family. As to quaternary structure, monomer. It depends on Mg(2+) as a cofactor.

The catalysed reaction is adenosine(37) in tRNA + dimethylallyl diphosphate = N(6)-dimethylallyladenosine(37) in tRNA + diphosphate. Functionally, catalyzes the transfer of a dimethylallyl group onto the adenine at position 37 in tRNAs that read codons beginning with uridine, leading to the formation of N6-(dimethylallyl)adenosine (i(6)A). The protein is tRNA dimethylallyltransferase of Enterococcus faecalis (strain ATCC 700802 / V583).